We begin with the raw amino-acid sequence, 341 residues long: L-threonine 3-dehydrogenase (341 aa).

Cys38 is a Zn(2+) binding site. Residues Thr40 and His43 each act as charge relay system in the active site. 6 residues coordinate Zn(2+): His63, Glu64, Cys93, Cys96, Cys99, and Cys107. NAD(+) is bound by residues Ile175, Asp195, Arg200, 262 to 264 (LGI), and 286 to 287 (IY).

This sequence belongs to the zinc-containing alcohol dehydrogenase family. In terms of assembly, homotetramer. The cofactor is Zn(2+).

Its subcellular location is the cytoplasm. It carries out the reaction L-threonine + NAD(+) = (2S)-2-amino-3-oxobutanoate + NADH + H(+). It participates in amino-acid degradation; L-threonine degradation via oxydo-reductase pathway; glycine from L-threonine: step 1/2. Functionally, catalyzes the NAD(+)-dependent oxidation of L-threonine to 2-amino-3-ketobutyrate. This chain is L-threonine 3-dehydrogenase, found in Shewanella baltica (strain OS223).